Consider the following 207-residue polypeptide: Claudin-11 (207 aa).

Residue Met1 is a topological domain, cytoplasmic. A helical membrane pass occupies residues Val2–Ile22. Residues Val23 to Arg82 lie on the Extracellular side of the membrane. The chain crosses the membrane as a helical span at residues Ala83 to Leu103. Residues Pro104 to Leu122 lie on the Cytoplasmic side of the membrane. Residues Ala123–Val143 traverse the membrane as a helical segment. The Extracellular segment spans residues Cys144–Ser157. A helical transmembrane segment spans residues Leu158–Cys178. The Cytoplasmic portion of the chain corresponds to Ala179–Val207. Ser197 and Ser198 each carry phosphoserine.

This sequence belongs to the claudin family. In terms of assembly, interacts with tetraspanin-3/TSPAN3. Interacts with OCLN.

The protein resides in the cell junction. It localises to the tight junction. The protein localises to the cell membrane. Functionally, plays a major role in tight junction-specific obliteration of the intercellular space, through calcium-independent cell-adhesion activity. This Homo sapiens (Human) protein is Claudin-11 (CLDN11).